A 315-amino-acid polypeptide reads, in one-letter code: METSSKGLLTQVTQFWNLLDDLAQSDPEGYEKFIQQQLKEGKQLCAAPEPQLCLQTRILKPKEKILFINLCQWTRIPAPQSTTHPVPLTVGKPEDTTEISDAYTVIDVAYNPDVLHAAEKDQVKKNQLIQMAMKCIEEKFQFTLSHSYHITKFRIKGSIQRMKQNLMGIQTDSIDLREKMRRELTLGQIRSSTMSNPDHFPQLLLPKDQVSGKAVCLIEEISSTEIQVEMKMPAYELKIVHDHSEKPLKIELKVELPGINSVSLCDLSVSEDDLLIEVSEKYRLHLNLPKLIDTEMTTAKFIKEKSTLIITMPLV.

Belongs to the PIH1 family.

This Homo sapiens (Human) protein is PIH1 domain-containing protein 2 (PIH1D2).